Here is a 636-residue protein sequence, read N- to C-terminus: DNA-directed RNA polymerase III subunit RPC3 (636 aa).

A disordered region spans residues 366 to 385 (SMQRRSQERSTHQGQSHKRL). The interval 563–584 (LAWNIANSIHKTEILKEENFTL) is leucine-zipper.

The protein belongs to the RNA polymerase beta chain family. As to quaternary structure, component of the RNA polymerase III (Pol III) complex consisting of 17 subunits.

The protein localises to the nucleus. DNA-dependent RNA polymerase catalyzes the transcription of DNA into RNA using the four ribonucleoside triphosphates as substrates. Specific core component of RNA polymerase III which synthesizes small RNAs, such as 5S rRNA and tRNAs. This is DNA-directed RNA polymerase III subunit RPC3 (RPC82) from Eremothecium gossypii (strain ATCC 10895 / CBS 109.51 / FGSC 9923 / NRRL Y-1056) (Yeast).